Reading from the N-terminus, the 177-residue chain is MAEITTIARPYAKAAFEFALEQKAVESWAEMLNFAALVSENETMQPLLSGSVASGKLAELFIGVCGEQINEQAQNLLKVMAENGRLVVLPAVAQQFVELQREYAKEVEAQIVSATELTSEQLQALSVSLEKRLARKVKLNCSIDTSLIAGVIITAGDLVIDGSVRGKVSRLSDTLQS.

The protein belongs to the ATPase delta chain family. As to quaternary structure, F-type ATPases have 2 components, F(1) - the catalytic core - and F(0) - the membrane proton channel. F(1) has five subunits: alpha(3), beta(3), gamma(1), delta(1), epsilon(1). F(0) has three main subunits: a(1), b(2) and c(10-14). The alpha and beta chains form an alternating ring which encloses part of the gamma chain. F(1) is attached to F(0) by a central stalk formed by the gamma and epsilon chains, while a peripheral stalk is formed by the delta and b chains.

It is found in the cell inner membrane. Functionally, f(1)F(0) ATP synthase produces ATP from ADP in the presence of a proton or sodium gradient. F-type ATPases consist of two structural domains, F(1) containing the extramembraneous catalytic core and F(0) containing the membrane proton channel, linked together by a central stalk and a peripheral stalk. During catalysis, ATP synthesis in the catalytic domain of F(1) is coupled via a rotary mechanism of the central stalk subunits to proton translocation. This protein is part of the stalk that links CF(0) to CF(1). It either transmits conformational changes from CF(0) to CF(1) or is implicated in proton conduction. This Shewanella halifaxensis (strain HAW-EB4) protein is ATP synthase subunit delta.